The sequence spans 164 residues: Interferon gamma (164 aa).

A signal peptide spans 1-19 (MTCQTYNLFVLSVIMIYYG). 2 N-linked (GlcNAc...) asparagine glycosylation sites follow: asparagine 42 and asparagine 61.

This sequence belongs to the type II (or gamma) interferon family. As to quaternary structure, homodimer.

Its subcellular location is the secreted. In terms of biological role, produced by lymphocytes activated by specific antigens or mitogens. IFN-gamma, in addition to having antiviral activity, has important immunoregulatory functions. It is a potent activator of macrophages, it has antiproliferative effects on transformed cells and it can potentiate the antiviral and antitumor effects of the type I interferons. The sequence is that of Interferon gamma (IFNG) from Numida meleagris (Helmeted guineafowl).